A 153-amino-acid chain; its full sequence is ORM1-like protein 1 (153 aa).

The Cytoplasmic portion of the chain corresponds to methionine 1–alanine 27. A run of 2 helical transmembrane segments spans residues leucine 28 to proline 46 and valine 47 to methionine 64. Over histidine 65 to serine 105 the chain is Cytoplasmic. Helical transmembrane passes span proline 106 to histidine 123 and phenylalanine 124 to proline 140. Topologically, residues glutamine 141 to tyrosine 153 are cytoplasmic.

The protein belongs to the ORM family. As to quaternary structure, ceramide-sensitive subunit of the serine palmitoyltransferase (SPT) complex, which is also composed of SPTLC1, SPTLC2/3 and SPTSSA/B.

It localises to the endoplasmic reticulum membrane. Its function is as follows. Plays an essential role in the homeostatic regulation of sphingolipid de novo biosynthesis by modulating the activity of the serine palmitoyltransferase (SPT) in response to ceramide levels. When complexed to SPT, the binding of ceramides to its N-terminus stabilizes a conformation that block SPT substrate entry, hence preventing SPT catalytic activity. Through this mechanism, maintains ceramide levels at sufficient concentrations for the production of complex sphingolipids, but which prevents the accumulation of ceramides to levels that trigger apoptosis. The sequence is that of ORM1-like protein 1 (ormdl1) from Danio rerio (Zebrafish).